The chain runs to 384 residues: Inactive lipoate--protein ligase 2 (384 aa).

The 225-residue stretch at 79 to 303 (NESKGNECIF…HIKHIINYKN (225 aa)) folds into the BPL/LPL catalytic domain.

Its subcellular location is the mitochondrion. The protein resides in the plastid. The protein localises to the apicoplast. In terms of biological role, in the mitochondrion and together with LipL1, involved in the lipoylation of the E2 component of the branched chain alpha-ketoacid dehydrogenase complex BCKDH-E2/BCDH and the E2 component of the alpha -ketoglutarate dehydrogenase complex KDH. LipL1 is responsible for catalysing the activation of lipoate, forming lipoyl-AMP while LipL2 is required but is not capable of catalyzing this reaction. Although its role is unclear, it may catalyze the transfer of lipoyl groups from lipoyl-AMP to BCDH and KDH or act as an effector protein. The sequence is that of Inactive lipoate--protein ligase 2 from Plasmodium falciparum (isolate 3D7).